The primary structure comprises 78 residues: Translation initiation factor IF-1 (78 aa).

One can recognise an S1-like domain in the interval 1–72 (MAKEAEMEFE…TRGRITYRKI (72 aa)).

It belongs to the IF-1 family. In terms of assembly, component of the 30S ribosomal translation pre-initiation complex which assembles on the 30S ribosome in the order IF-2 and IF-3, IF-1 and N-formylmethionyl-tRNA(fMet); mRNA recruitment can occur at any time during PIC assembly.

The protein localises to the cytoplasm. Its function is as follows. One of the essential components for the initiation of protein synthesis. Stabilizes the binding of IF-2 and IF-3 on the 30S subunit to which N-formylmethionyl-tRNA(fMet) subsequently binds. Helps modulate mRNA selection, yielding the 30S pre-initiation complex (PIC). Upon addition of the 50S ribosomal subunit IF-1, IF-2 and IF-3 are released leaving the mature 70S translation initiation complex. The protein is Translation initiation factor IF-1 of Mesoplasma florum (strain ATCC 33453 / NBRC 100688 / NCTC 11704 / L1) (Acholeplasma florum).